We begin with the raw amino-acid sequence, 445 residues long: MSKVVRSSKYRHVFAAQPKKEECYQNLKVTKSAWDSNYVAANTRYFGVIWDAAGGGSFAVIPHEASGKTTSVPLFNGHKSAVLDIAFHPFNENLVGSVSEDCNICIWGIPEGGLTDSISTPLQTLSGHKRKVGTISFNPVADNVAVTSSGDFLVKTWDVEQGKNLTTVEGHSDMITSCEWNHNGSQIVTTCKDKKARVFDPRTNSIVNEVVCHQGVKNSRAIFAKDKVITVGFSKTSERELHIYDPRAFTTPLSAQVVDSASGLLMPFYDADNSILYLAGKGDGNIRYYELVDESPYIHFLSEFKSATPQRGLCFLPKRCLNTSECEIARGLKVTPFTVEPISFRVPRKSDIFQDDIYPDTYAGEPSLTAEQWVSGTNAEPKTVSLAGGFVKKASAVEFKPVVQVQEGPKNEKELREEYEKLKIRVAYLESEIVKKDAKIKELTN.

4 WD repeats span residues 77–117 (GHKS…LTDS), 127–167 (GHKR…NLTT), 170–209 (GHSDMITSCEWNHNGSQIVTTCKDKKARVFDPRTNSIVNE), and 259–299 (DSAS…PYIH). Residues 410–444 (KNEKELREEYEKLKIRVAYLESEIVKKDAKIKELT) are a coiled coil.

It belongs to the WD repeat coronin family. Binds to F-actin.

Its subcellular location is the cell surface. In terms of biological role, required for normal motility. Participates in cytokinesis. The chain is Coronin-A (corA) from Dictyostelium discoideum (Social amoeba).